Here is a 315-residue protein sequence, read N- to C-terminus: Beta-ketoacyl-[acyl-carrier-protein] synthase III (315 aa).

Catalysis depends on residues cysteine 115 and histidine 244. The segment at 245–249 (QANAR) is ACP-binding. The active site involves asparagine 274.

This sequence belongs to the thiolase-like superfamily. FabH family. In terms of assembly, homodimer.

It is found in the cytoplasm. It catalyses the reaction malonyl-[ACP] + acetyl-CoA + H(+) = 3-oxobutanoyl-[ACP] + CO2 + CoA. It participates in lipid metabolism; fatty acid biosynthesis. Functionally, catalyzes the condensation reaction of fatty acid synthesis by the addition to an acyl acceptor of two carbons from malonyl-ACP. Catalyzes the first condensation reaction which initiates fatty acid synthesis and may therefore play a role in governing the total rate of fatty acid production. Possesses both acetoacetyl-ACP synthase and acetyl transacylase activities. Its substrate specificity determines the biosynthesis of branched-chain and/or straight-chain of fatty acids. In Rubrobacter xylanophilus (strain DSM 9941 / JCM 11954 / NBRC 16129 / PRD-1), this protein is Beta-ketoacyl-[acyl-carrier-protein] synthase III.